A 248-amino-acid polypeptide reads, in one-letter code: MLYLHDVWVNWFEGEENGYNVCHFYEWRKDDTIELLDQVPLLKVDSTLYHYIENELLELPQKMLEDVHHKAYIRKNHERLQQEYCFVVTDGKGIIAIDTIGYNVPIRKSRLIPRQEQMVYEMVENVQAEKYEFQVEEMEKEHHILSPSPFIMNGLTRKERQLKQLLFMALDQLHTTKNTAEIRYWFTEWDPSAYGMVQHMEFEDIWAKLYEEAKTGWSEKHEQLCERLVKGQPFFEKLWEMENEQKVN.

The protein belongs to the UPF0736 family.

The chain is UPF0736 protein BCAH187_A1335 from Bacillus cereus (strain AH187).